The sequence spans 377 residues: MVKSDYYEILGVSKNADEREIKKSYKRLAMKFHPDRNPGDVSAESKFKEIKEAYEVLSNPEKRSAYDQYGHAIFEQNSGGMGGSNTGGSDFSDIFGDVFGDIFGGSRRSRSRRGSDLRYDIELSLEEAVKGVVREICVPTLVTCLQCRGSGAKSSASIVSCVTCHGHGQIQMRQGFFSVQQSCPSCNGHGKIIKEICNKCRGSGRIERTKTLSVKIPAGVSTGDRIRLSGEGESGKNGAPAGDLYVQVQIKKHPIFDREEKNLYCEVPISFSMAALGGEIEVPTLDGRVKLKIPPETQTGKLFRMRGKGVKSVRGIGGHGDLLCRVVVETPVRLSDRQKQLLQDLSDSFGGPYGHKNSPKSKTFFDGVKKFFDDLTR.

In terms of domain architecture, J spans 5–70 (DYYEILGVSK…EKRSAYDQYG (66 aa)). The segment at 131 to 209 (GVVREICVPT…CRGSGRIERT (79 aa)) adopts a CR-type zinc-finger fold. Zn(2+)-binding residues include Cys-144, Cys-147, Cys-161, Cys-164, Cys-183, Cys-186, Cys-197, and Cys-200. CXXCXGXG motif repeat units follow at residues 144–151 (CLQCRGSG), 161–168 (CVTCHGHG), 183–190 (CPSCNGHG), and 197–204 (CNKCRGSG).

This sequence belongs to the DnaJ family. Homodimer. Requires Zn(2+) as cofactor.

The protein resides in the cytoplasm. Its function is as follows. Participates actively in the response to hyperosmotic and heat shock by preventing the aggregation of stress-denatured proteins and by disaggregating proteins, also in an autonomous, DnaK-independent fashion. Unfolded proteins bind initially to DnaJ; upon interaction with the DnaJ-bound protein, DnaK hydrolyzes its bound ATP, resulting in the formation of a stable complex. GrpE releases ADP from DnaK; ATP binding to DnaK triggers the release of the substrate protein, thus completing the reaction cycle. Several rounds of ATP-dependent interactions between DnaJ, DnaK and GrpE are required for fully efficient folding. Also involved, together with DnaK and GrpE, in the DNA replication of plasmids through activation of initiation proteins. The sequence is that of Chaperone protein DnaJ from Blochmanniella floridana.